A 114-amino-acid polypeptide reads, in one-letter code: U17-barytoxin-Tl1a (114 aa).

Positions 1 to 20 (MKTIIVFLSLLVLATKFGDA) are cleaved as a signal peptide. Positions 21–74 (NEGVNQEQMKEVIQNEFREDFLNEMAAMSLLQQLEAIESTLLEKEADRNSRQKR) are excised as a propeptide. 3 disulfides stabilise this stretch: cysteine 75–cysteine 88, cysteine 82–cysteine 93, and cysteine 87–cysteine 108.

This sequence belongs to the neurotoxin 14 (magi-1) family. 03 (ICK-30-40) subfamily. As to expression, expressed by the venom gland.

Its subcellular location is the secreted. Ion channel inhibitor. The polypeptide is U17-barytoxin-Tl1a (Trittame loki (Brush-footed trapdoor spider)).